A 389-amino-acid chain; its full sequence is tRNA (guanine-N(7)-)-methyltransferase non-catalytic subunit TRM82 (389 aa).

WD repeat units lie at residues 44 to 86 (QNVP…HQLK), 134 to 179 (GHTS…KGFL), and 184 to 222 (QFVS…LITE).

The protein belongs to the WD repeat TRM82 family. Forms a heterodimer with the catalytic subunit TRM8.

The protein resides in the nucleus. The protein operates within tRNA modification; N(7)-methylguanine-tRNA biosynthesis. In terms of biological role, required for the formation of N(7)-methylguanine at position 46 (m7G46) in tRNA. In the complex, it is required to stabilize and induce conformational changes of the catalytic subunit. This Lodderomyces elongisporus (strain ATCC 11503 / CBS 2605 / JCM 1781 / NBRC 1676 / NRRL YB-4239) (Yeast) protein is tRNA (guanine-N(7)-)-methyltransferase non-catalytic subunit TRM82.